The primary structure comprises 576 residues: G protein-coupled receptor kinase 6 (576 aa).

An N-terminal region spans residues methionine 1 to threonine 185. An RGS domain is found at tyrosine 53–leucine 171. The Protein kinase domain occupies phenylalanine 186–phenylalanine 448. ATP-binding positions include leucine 192–valine 200, lysine 215, and threonine 264–aspartate 270. Residue aspartate 311 is the Proton acceptor of the active site. Residue glutamate 315–leucine 318 coordinates ATP. An AGC-kinase C-terminal domain is found at lysine 449 to glutamate 514. Residue serine 484 is modified to Phosphoserine. Threonine 485 is modified (phosphothreonine). Residues cysteine 561, cysteine 562, and cysteine 565 are each lipidated (S-palmitoyl cysteine). 2 positions are modified to phosphoserine: serine 566 and serine 568.

Belongs to the protein kinase superfamily. AGC Ser/Thr protein kinase family. GPRK subfamily. In terms of assembly, interacts with GIT1. In terms of tissue distribution, expressed in the brain in striatal neurons.

The protein resides in the membrane. It carries out the reaction [G-protein-coupled receptor] + ATP = [G-protein-coupled receptor]-phosphate + ADP + H(+). Functionally, specifically phosphorylates the activated forms of G protein-coupled receptors. Such receptor phosphorylation initiates beta-arrestin-mediated receptor desensitization, internalization, and signaling events leading to their desensitization. Seems to be involved in the desensitization of D2-like dopamine receptors in striatum and chemokine receptor CXCR4 which is critical for CXCL12-induced cell chemotaxis. Phosphorylates rhodopsin (RHO) (in vitro) and a non G-protein-coupled receptor, LRP6 during Wnt signaling (in vitro). This is G protein-coupled receptor kinase 6 (Grk6) from Mus musculus (Mouse).